The sequence spans 243 residues: Type III pantothenate kinase (243 aa).

7–14 (DLGNSRFK) is an ATP binding site. Residues Y91 and 98–101 (GVDR) each bind substrate. D100 acts as the Proton acceptor in catalysis. Residue T122 coordinates ATP. T172 contributes to the substrate binding site.

It belongs to the type III pantothenate kinase family. In terms of assembly, homodimer. The cofactor is NH4(+). K(+) is required as a cofactor.

The protein localises to the cytoplasm. The enzyme catalyses (R)-pantothenate + ATP = (R)-4'-phosphopantothenate + ADP + H(+). The protein operates within cofactor biosynthesis; coenzyme A biosynthesis; CoA from (R)-pantothenate: step 1/5. Catalyzes the phosphorylation of pantothenate (Pan), the first step in CoA biosynthesis. The chain is Type III pantothenate kinase from Stenotrophomonas maltophilia (strain R551-3).